Here is a 352-residue protein sequence, read N- to C-terminus: Type II restriction enzyme HaeII (352 aa).

The catalysed reaction is Endonucleolytic cleavage of DNA to give specific double-stranded fragments with terminal 5'-phosphates.. A P subtype restriction enzyme that recognizes the double-stranded sequence 5'-RGCGCY-3' and cleaves after C-5. The polypeptide is Type II restriction enzyme HaeII (haeIIR) (Haemophilus aegyptius).